We begin with the raw amino-acid sequence, 582 residues long: uncharacterized protein (582 aa).

Positions 1–27 (MNYAVLPPELNSLRMFTGAGSAPMLAA) are cleaved as a signal peptide. Residues 241 to 257 (GNGRAGLPGSGNVGNGN) show a composition bias toward gly residues. A disordered region spans residues 241–278 (GNGRAGLPGSGNVGNGNLGNSNLGSGNTGNSNVGFGNT). Residues 258 to 278 (LGNSNLGSGNTGNSNVGFGNT) show a composition bias toward low complexity.

The protein belongs to the mycobacterial PPE family.

This is an uncharacterized protein from Mycobacterium tuberculosis (strain ATCC 25618 / H37Rv).